The sequence spans 1726 residues: Transcription elongation factor SPT6 (1726 aa).

Acidic residues-rich tracts occupy residues 1 to 18 (MSDF…EFEE), 31 to 45 (EEDE…EDQD), and 55 to 79 (DDDD…SDSG). 3 disordered regions span residues 1 to 196 (MSDF…KGKK), 219 to 248 (AEFD…KKQT), and 482 to 512 (EVSE…QASR). Phosphoserine is present on Ser-90. The span at 93 to 104 (DYLDDDDLDLIE) shows a compositional bias: acidic residues. Over residues 110–120 (KVKRRKKKYSR) the composition is skewed to basic residues. Acidic residues-rich tracts occupy residues 146–157 (GDGEGEVEDGEA), 166–186 (DEEE…DDDG), 219–240 (AEFD…DDES), and 484–501 (SEED…EEEE). The segment covering 502–512 (QKGPDLKQASR) has biased composition (basic and acidic residues). Residues 806–865 (LKRRNAWREDEREKKQQDVENLKKFLLSKKPHVVAVSGENRDAHMVMEDIKRTISELEQN) are a coiled coil. The S1 motif domain maps to 1204–1273 (WNHFDSGSCP…EKFNVDLTCR (70 aa)). Residues 1316–1426 (YIKRVIAHPS…LLGHKYFHEC (111 aa)) form the SH2 domain. Phosphothreonine is present on Thr-1522. Phosphoserine is present on Ser-1525. The segment covering 1611 to 1627 (LMTPSYSYTTPGQQQAM) has biased composition (polar residues). A disordered region spans residues 1611 to 1726 (LMTPSYSYTT…ATPLLDEMDR (116 aa)). Composition is skewed to low complexity over residues 1628–1640 (TTPQ…PQSS) and 1647–1656 (SSSTPSSSSS). Residues 1657–1669 (RVRTPQPKASSHT) are compositionally biased toward polar residues.

Belongs to the SPT6 family.

It is found in the nucleus. In terms of biological role, histone H3-H4 chaperone that plays a role in maintenance of chromatin structure during RNA polymerase II transcription elongation. Promotes the activation of the myogenic gene program by entailing erasure of the repressive H3K27me3 epigenetic mark through stabilization of the chromatin interaction of the H3K27 demethylase KDM6A. Plays an important role during early patterning and somitogenesis of the embryo. In Danio rerio (Zebrafish), this protein is Transcription elongation factor SPT6 (supt6h).